A 134-amino-acid chain; its full sequence is Large ribosomal subunit protein bL17 (134 aa).

This sequence belongs to the bacterial ribosomal protein bL17 family. As to quaternary structure, part of the 50S ribosomal subunit. Contacts protein L32.

The polypeptide is Large ribosomal subunit protein bL17 (Aromatoleum aromaticum (strain DSM 19018 / LMG 30748 / EbN1) (Azoarcus sp. (strain EbN1))).